A 2193-amino-acid polypeptide reads, in one-letter code: Genome polyprotein (2193 aa).

Residues 1–22 (MGSQVSTQRSGSHENSNSASEG) are disordered. Residue Gly2 is the site of N-myristoyl glycine; by host attachment. Over 2–1503 (GSQVSTQRSG…HLNRAVLIMQ (1502 aa)) the chain is Cytoplasmic. Amphipathic alpha-helix regions lie at residues 566-588 (GDGI…LTSL) and 568-588 (GIAD…LTSL). Catalysis depends on for protease 2A activity residues His883 and Asp901. Positions 918 and 920 each coordinate Zn(2+). The For protease 2A activity role is filled by Cys972. Zn(2+) contacts are provided by Cys978 and His980. The tract at residues 1112–1184 (SASWLKKFND…EQSAASQEDL (73 aa)) is membrane-binding. The segment at 1112–1250 (SASWLKKFND…SPGTGKSLAT (139 aa)) is oligomerization. Residues 1133 to 1137 (SNKIS) form an RNA-binding region. The 159-residue stretch at 1216–1374 (EKRMNNYMQF…YKTDLGRLDA (159 aa)) folds into the SF3 helicase domain. 1240 to 1247 (GSPGTGKS) contributes to the ATP binding site. Zn(2+) contacts are provided by Cys1381, Cys1392, and Cys1397. The C4-type; degenerate zinc-finger motif lies at 1381–1397 (CSENNTANFKRCSPLVC). The segment at 1424–1431 (EYNNRYAI) is RNA-binding. An oligomerization region spans residues 1435–1440 (IEALFQ). The stretch at 1504 to 1519 (SIATVVAVVSLVYVIY) is an intramembrane region. Topologically, residues 1520–2193 (KLFAGFQGAY…NLRRNWLELF (674 aa)) are cytoplasmic. The residue at position 1529 (Tyr1529) is an O-(5'-phospho-RNA)-tyrosine. The Peptidase C3 domain occupies 1549 to 1727 (GPSLDFALSL…FCAGLKRSYF (179 aa)). Residues His1588, Glu1619, and Cys1695 each act as for protease 3C activity in the active site. The region spanning 1958-2073 (GSLFAFDYSG…ASYPFPIDCL (116 aa)) is the RdRp catalytic domain. Mg(2+)-binding residues include Asp1964 and Asp2060.

The protein belongs to the picornaviruses polyprotein family. Interacts with capsid protein VP1 and capsid protein VP3 to form heterotrimeric protomers. As to quaternary structure, interacts with capsid protein VP0, and capsid protein VP3 to form heterotrimeric protomers. Five protomers subsequently associate to form pentamers which serve as building blocks for the capsid. Interacts with capsid protein VP2, capsid protein VP3 and capsid protein VP4 following cleavage of capsid protein VP0. In terms of assembly, interacts with capsid protein VP1 and capsid protein VP3 in the mature capsid. Interacts with capsid protein VP0 and capsid protein VP1 to form heterotrimeric protomers. Five protomers subsequently associate to form pentamers which serve as building blocks for the capsid. Interacts with capsid protein VP4 in the mature capsid. Interacts with protein 2C; this interaction may be important for virion morphogenesis. As to quaternary structure, interacts with capsid protein VP1 and capsid protein VP3. In terms of assembly, homodimer. Homohexamer; forms a hexameric ring structure with 6-fold symmetry characteristic of AAA+ ATPases. Interacts (via N-terminus) with host RTN3 (via reticulon domain); this interaction is important for viral replication. Interacts with capsid protein VP3; this interaction may be important for virion morphogenesis. As to quaternary structure, interacts with protein 3CD. In terms of assembly, homodimer. Interacts with host GBF1. Interacts (via GOLD domain) with host ACBD3 (via GOLD domain); this interaction allows the formation of a viral protein 3A/ACBD3 heterotetramer with a 2:2 stoichiometry, which will stimulate the recruitment of host PI4KB in order to synthesize PI4P at the viral RNA replication sites. Interacts with RNA-directed RNA polymerase. As to quaternary structure, interacts with host IFIH1/MDA5; this interaction inhibits host IFIH1. In terms of assembly, interacts with protein 3AB and with RNA-directed RNA polymerase. Interacts with Viral protein genome-linked and with protein 3CD. Requires Mg(2+) as cofactor. Post-translationally, specific enzymatic cleavages in vivo by the viral proteases yield processing intermediates and the mature proteins. In terms of processing, myristoylation is required for the formation of pentamers during virus assembly. Further assembly of 12 pentamers and a molecule of genomic RNA generates the provirion. During virion maturation, immature virions are rendered infectious following cleavage of VP0 into VP4 and VP2. This maturation seems to be an autocatalytic event triggered by the presence of RNA in the capsid and it is followed by a conformational change infectious virion. Post-translationally, myristoylation is required during RNA encapsidation and formation of the mature virus particle. In terms of processing, VPg is uridylylated by the polymerase into VPg-pUpU. This acts as a nucleotide-peptide primer for the genomic RNA replication.

It is found in the virion. The protein resides in the host cytoplasm. Its subcellular location is the host cytoplasmic vesicle membrane. It localises to the host nucleus. The enzyme catalyses a ribonucleoside 5'-triphosphate + H2O = a ribonucleoside 5'-diphosphate + phosphate + H(+). The catalysed reaction is Selective cleavage of Tyr-|-Gly bond in the picornavirus polyprotein.. It catalyses the reaction RNA(n) + a ribonucleoside 5'-triphosphate = RNA(n+1) + diphosphate. It carries out the reaction Selective cleavage of Gln-|-Gly bond in the poliovirus polyprotein. In other picornavirus reactions Glu may be substituted for Gln, and Ser or Thr for Gly.. Its activity is regulated as follows. Replication or transcription is subject to high level of random mutations by the nucleotide analog ribavirin. Its function is as follows. Forms an icosahedral capsid of pseudo T=3 symmetry with capsid proteins VP2 and VP3. The capsid is 300 Angstroms in diameter, composed of 60 copies of each capsid protein and enclosing the viral positive strand RNA genome. Capsid protein VP1 mainly forms the vertices of the capsid. Capsid protein VP1 interacts with host cell receptor to provide virion attachment to target host cells. This attachment induces virion internalization. After binding to its receptor, the capsid undergoes conformational changes. Capsid protein VP1 N-terminus (that contains an amphipathic alpha-helix) and capsid protein VP4 are externalized. Together, they shape a pore in the host membrane through which viral genome is translocated to host cell cytoplasm. Functionally, forms an icosahedral capsid of pseudo T=3 symmetry with capsid proteins VP2 and VP3. The capsid is 300 Angstroms in diameter, composed of 60 copies of each capsid protein and enclosing the viral positive strand RNA genome. Lies on the inner surface of the capsid shell. After binding to the host receptor, the capsid undergoes conformational changes. Capsid protein VP4 is released, Capsid protein VP1 N-terminus is externalized, and together, they shape a pore in the host membrane through which the viral genome is translocated into the host cell cytoplasm. In terms of biological role, component of immature procapsids, which is cleaved into capsid proteins VP4 and VP2 after maturation. Allows the capsid to remain inactive before the maturation step. Its function is as follows. Cysteine protease that cleaves viral polyprotein and specific host proteins. It is responsible for the autocatalytic cleavage between the P1 and P2 regions, which is the first cleavage occurring in the polyprotein. Also cleaves the host translation initiation factor EIF4G1, in order to shut down the capped cellular mRNA translation. Inhibits the host nucleus-cytoplasm protein and RNA trafficking by cleaving host members of the nuclear pores. Counteracts stress granule formation probably by antagonizing its assembly or promoting its dissassembly. Cleaves and inhibits host IFIH1/MDA5, thereby inhibiting the type-I IFN production and the establishment of the antiviral state. Cleaves and inhibits host MAVS, thereby inhibiting the type-I IFN production and the establishment of the antiviral state. Functionally, plays an essential role in the virus replication cycle by acting as a viroporin. Creates a pore in the host endoplasmic reticulum and as a consequence releases Ca2+ in the cytoplasm of infected cell. In turn, high levels of cytoplasmic calcium may trigger membrane trafficking and transport of viral ER-associated proteins to viroplasms, sites of viral genome replication. Induces and associates with structural rearrangements of intracellular membranes. Displays RNA-binding, nucleotide binding and NTPase activities. May play a role in virion morphogenesis and viral RNA encapsidation by interacting with the capsid protein VP3. In terms of biological role, localizes the viral replication complex to the surface of membranous vesicles. Together with protein 3CD binds the Cis-Active RNA Element (CRE) which is involved in RNA synthesis initiation. Acts as a cofactor to stimulate the activity of 3D polymerase, maybe through a nucleid acid chaperone activity. Its function is as follows. Localizes the viral replication complex to the surface of membranous vesicles. It inhibits host cell endoplasmic reticulum-to-Golgi apparatus transport and causes the disassembly of the Golgi complex, possibly through GBF1 interaction. This would result in depletion of MHC, trail receptors and IFN receptors at the host cell surface. Plays an essential role in viral RNA replication by recruiting ACBD3 and PI4KB at the viral replication sites, thereby allowing the formation of the rearranged membranous structures where viral replication takes place. Functionally, acts as a primer for viral RNA replication and remains covalently bound to viral genomic RNA. VPg is uridylylated prior to priming replication into VPg-pUpU. The oriI viral genomic sequence may act as a template for this. The VPg-pUpU is then used as primer on the genomic RNA poly(A) by the RNA-dependent RNA polymerase to replicate the viral genome. During genome replication, the VPg-RNA linkage is removed by the host TDP2, thereby accelerating replication. During the late stage of the replication cycle, host TDP2 is excluded from sites of viral RNA synthesis and encapsidation, allowing for the generation of progeny virions. Involved in the viral replication complex and viral polypeptide maturation. It exhibits protease activity with a specificity and catalytic efficiency that is different from protease 3C. Protein 3CD lacks polymerase activity. Protein 3CD binds to the 5'UTR of the viral genome. In terms of biological role, major viral protease that mediates proteolytic processing of the polyprotein. Cleaves host EIF5B, contributing to host translation shutoff. Also cleaves host PABPC1, contributing to host translation shutoff. Binds and inhibits host IFIH1/MDA5, thereby inhibiting the type-I IFN production and the establishment of the antiviral state. Cleaves host MAP3K7/TAK1, resulting in inhibition of TRAF6-triggered NF-kappa-B induction. Cleaves host NLRP1, triggers host N-glycine-mediated degradation of the autoinhibitory NLRP1 N-terminal fragment. Its function is as follows. Replicates the viral genomic RNA on the surface of intracellular membranes. May form linear arrays of subunits that propagate along a strong head-to-tail interaction called interface-I. Covalently attaches UMP to a tyrosine of VPg, which is used to prime RNA synthesis. The positive stranded RNA genome is first replicated at virus induced membranous vesicles, creating a dsRNA genomic replication form. This dsRNA is then used as template to synthesize positive stranded RNA genomes. ss(+)RNA genomes are either translated, replicated or encapsidated. This is Genome polyprotein from Homo sapiens (Human).